We begin with the raw amino-acid sequence, 356 residues long: MDFFYKYLALVAIASLMVFILLFGQIPKLKYTVIGKLNRFFMVTIPYHLHVLDSRYADGRCSAAMRSLSNYVLYKNNPLVVFLYLALITIGIASFFIYGSSLTQKFSIIDWISVLTSVLLPYISLYIAAKSNPGKIDLKNWNEASRRFPYDYKIFFPNKCSTCKFEKPARSKHCRLCNICVEKFDHHCIWINNCVGLNNARYFFLFLLCTIQLLFHSILRLGYHFNALRDMRQYPSFLRSWWFAIKSEGELGSVFLISLICSVLVLCLLGYEFFLVYAGYTTNESEKWSDLAHLVKNRKVYMYYENGSQLLALDKDASNDAILVTSMSQIDNIYDNGFYNNFFSLVFPYRHLYSTT.

Residues 1–2 lie on the Lumenal side of the membrane; it reads MD. The chain crosses the membrane as a helical span at residues 3 to 23; sequence FFYKYLALVAIASLMVFILLF. Over 24–78 the chain is Cytoplasmic; sequence GQIPKLKYTVIGKLNRFFMVTIPYHLHVLDSRYADGRCSAAMRSLSNYVLYKNNP. Residues 79–99 form a helical membrane-spanning segment; sequence LVVFLYLALITIGIASFFIYG. Residues 100–107 are Lumenal-facing; it reads SSLTQKFS. A helical membrane pass occupies residues 108-128; that stretch reads IIDWISVLTSVLLPYISLYIA. Over 129–201 the chain is Cytoplasmic; it reads AKSNPGKIDL…NNCVGLNNAR (73 aa). Positions 158–208 constitute a DHHC domain; that stretch reads NKCSTCKFEKPARSKHCRLCNICVEKFDHHCIWINNCVGLNNARYFFLFLL. Residues 202–222 traverse the membrane as a helical segment; the sequence is YFFLFLLCTIQLLFHSILRLG. At 223–253 the chain is on the lumenal side; sequence YHFNALRDMRQYPSFLRSWWFAIKSEGELGS. The chain crosses the membrane as a helical span at residues 254–274; that stretch reads VFLISLICSVLVLCLLGYEFF. The Cytoplasmic portion of the chain corresponds to 275-356; sequence LVYAGYTTNE…FPYRHLYSTT (82 aa).

The protein belongs to the DHHC palmitoyltransferase family. SWF1 subfamily.

It is found in the endoplasmic reticulum membrane. The catalysed reaction is L-cysteinyl-[protein] + hexadecanoyl-CoA = S-hexadecanoyl-L-cysteinyl-[protein] + CoA. Its function is as follows. Palmitoyltransferase that targets several endosomal SNAREs. Palmitoylates the SNAREs at cysteine residues close to the cytoplasmic end of their transmembrane domain. May have a role in the cellular quality control of transmembrane domain-containing proteins. The protein is Palmitoyltransferase swf1 (swf1) of Schizosaccharomyces pombe (strain 972 / ATCC 24843) (Fission yeast).